A 108-amino-acid chain; its full sequence is Nucleoid-associated protein Mpe_A2533 (108 aa).

The segment at 86–108 is disordered; that stretch reads TSEEKMGKLTAGMPLPPGMKLPF. Residues 99-108 are compositionally biased toward pro residues; the sequence is PLPPGMKLPF.

The protein belongs to the YbaB/EbfC family. In terms of assembly, homodimer.

The protein resides in the cytoplasm. The protein localises to the nucleoid. Its function is as follows. Binds to DNA and alters its conformation. May be involved in regulation of gene expression, nucleoid organization and DNA protection. The protein is Nucleoid-associated protein Mpe_A2533 of Methylibium petroleiphilum (strain ATCC BAA-1232 / LMG 22953 / PM1).